Consider the following 490-residue polypeptide: MSRMAEQQLYIHGGYTSATSGHTFETINPANGNVLATVQAAGREDVDRAVKSAQQGQKIWAAMTAMERSRILRRAVDILRERNDELAKLETLDTGKAYSETSTVDIVTGADVLEYYAGLIPSLEGSQIPLRETSFVYTRREPLGVVAGIGAWNYPIQIALWKSAPALAAGNAMIFKPSEVTPLTALKLAEIYSEAGLPDGVFNVLPGVGAETGQYLTEHPGIAKVSFTGGVASGKKVMANSAASSLKEVTMELGGKSPLIVFDDADLELAADIAMMANFFSSGQVCTNGTRVFVPAKCKAAFEQKILARVERIRADDVFDPQTNFGPLVSFPHRDNVLRYIAKGKEEGARVLCGGDVLKGDGFDNGAWVAPTVFTDCSDDMTIVREEIFGPVMSILIYESEDEVIRRANDTDYGLAAGIVTADLNRAHRVIHQLEAGICWINTWGESPAEMPVGGYKHSGIGRENGVMTLQSYTQVKSIQVEMAKFQSIF.

K(+)-binding residues include threonine 26, isoleucine 27, and aspartate 93. Residue 150-152 (GAW) participates in NAD(+) binding. Lysine 162 functions as the Charge relay system in the catalytic mechanism. 176-179 (KPSE) contributes to the NAD(+) binding site. Valine 180 serves as a coordination point for K(+). 230-233 (GVAS) provides a ligand contact to NAD(+). Leucine 246 provides a ligand contact to K(+). Glutamate 252 functions as the Proton acceptor in the catalytic mechanism. The NAD(+) site is built by glycine 254, cysteine 286, and glutamate 387. Residue cysteine 286 is the Nucleophile of the active site. Position 286 is a cysteine sulfenic acid (-SOH) (cysteine 286). Residues lysine 457 and glycine 460 each contribute to the K(+) site. Glutamate 464 functions as the Charge relay system in the catalytic mechanism.

This sequence belongs to the aldehyde dehydrogenase family. In terms of assembly, dimer of dimers. Requires K(+) as cofactor.

It carries out the reaction betaine aldehyde + NAD(+) + H2O = glycine betaine + NADH + 2 H(+). It participates in amine and polyamine biosynthesis; betaine biosynthesis via choline pathway; betaine from betaine aldehyde: step 1/1. In terms of biological role, involved in the biosynthesis of the osmoprotectant glycine betaine. Catalyzes the irreversible oxidation of betaine aldehyde to the corresponding acid. This Escherichia coli O6:K15:H31 (strain 536 / UPEC) protein is Betaine aldehyde dehydrogenase.